A 195-amino-acid polypeptide reads, in one-letter code: Early E3 22.2 kDa glycoprotein (195 aa).

N-linked (GlcNAc...) asparagine; by host glycans are attached at residues Asn20, Asn61, Asn76, Asn88, Asn126, and Asn139.

In Canine adenovirus serotype 1 (strain Glaxo) (CAdV-1), this protein is Early E3 22.2 kDa glycoprotein.